The sequence spans 338 residues: Malate dehydrogenase, mitochondrial (338 aa).

The transit peptide at 1–24 (MLSALARPAGAALRRSFSTSAQNN) directs the protein to the mitochondrion. Residues 31 to 37 (GASGGIG) and Asp57 contribute to the NAD(+) site. Ser33 carries O-linked (GlcNAc) serine glycosylation. Lys78 and Lys91 each carry N6-acetyllysine; alternate. 2 positions are modified to N6-succinyllysine; alternate: Lys78 and Lys91. Substrate is bound by residues Arg104 and Arg110. NAD(+)-binding positions include Asn117 and 140-142 (IAN). Asn142 contributes to the substrate binding site. Lys165 is modified (N6-acetyllysine). Arg176 provides a ligand contact to substrate. Lys185 is subject to N6-acetyllysine; alternate. Lys185 carries the N6-succinyllysine; alternate modification. The Proton acceptor role is filled by His200. Lys203 carries the post-translational modification N6-succinyllysine. Residues Lys215 and Lys239 each carry the N6-acetyllysine; alternate modification. Lys215 and Lys239 each carry N6-succinyllysine; alternate. Lys239 bears the N6-malonyllysine; alternate mark. Ser246 bears the Phosphoserine mark. An NAD(+)-binding site is contributed by Met251. Lys269 carries the N6-succinyllysine modification. 3 positions are modified to N6-acetyllysine; alternate: Lys296, Lys301, and Lys307. Lys296, Lys301, and Lys307 each carry N6-succinyllysine; alternate. N6-malonyllysine; alternate is present on Lys307. At Thr309 the chain carries Phosphothreonine. N6-acetyllysine; alternate is present on residues Lys314 and Lys324. N6-succinyllysine; alternate is present on residues Lys314 and Lys324. Ser326 is subject to Phosphoserine. Residues Lys328, Lys329, and Lys335 each carry the N6-acetyllysine; alternate modification. The residue at position 328 (Lys328) is an N6-succinyllysine; alternate. N6-malonyllysine; alternate is present on Lys329. At Lys335 the chain carries N6-succinyllysine; alternate.

It belongs to the LDH/MDH superfamily. MDH type 1 family. In terms of assembly, homodimer. Post-translationally, acetylation is enhanced after treatment either with trichostin A (TCA) or with nicotinamide (NAM) with the appearance of tri- and tetraacetylations. Glucose also increases acetylation. Acetylation of Lys-239 and Lys-314 is observed in liver mitochondria from fasted mice but not from fed mice.

The protein resides in the mitochondrion matrix. It catalyses the reaction (S)-malate + NAD(+) = oxaloacetate + NADH + H(+). With respect to regulation, enzyme activity is enhanced by acetylation. The chain is Malate dehydrogenase, mitochondrial (Mdh2) from Mus musculus (Mouse).